A 172-amino-acid polypeptide reads, in one-letter code: Interferon tau-3 (172 aa).

Cystine bridges form between Cys-1-Cys-99 and Cys-29-Cys-139. A glycan (N-linked (GlcNAc...) asparagine) is linked at Asn-78.

This sequence belongs to the alpha/beta interferon family. IFN-alphaII subfamily. Constitutively and exclusively expressed in the mononuclear cells of the extraembryonic trophectoderm.

The protein localises to the secreted. Its function is as follows. Paracrine hormone primarily responsible for maternal recognition of pregnancy. Interacts with endometrial receptors, probably type I interferon receptors, and blocks estrogen receptor expression, preventing the estrogen-induced increase in oxytocin receptor expression in the endometrium. This results in the suppression of the pulsatile endometrial release of the luteolytic hormone prostaglandin F2-alpha, hindering the regression of the corpus luteum (luteolysis) and therefore a return to ovarian cyclicity. This, and a possible direct effect of IFN-tau on prostaglandin synthesis, leads in turn to continued ovarian progesterone secretion, which stimulates the secretion by the endometrium of the nutrients required for the growth of the conceptus. In summary, displays particularly high antiviral and antiproliferative potency concurrently with particular weak cytotoxicity, high antiluteolytic activity and immunomodulatory properties. In contrast with other IFNs, IFN-tau is not virally inducible. This chain is Interferon tau-3 (IFNT3), found in Bos taurus (Bovine).